The chain runs to 371 residues: Probable L-aspartate decarboxylase (371 aa).

Residue lysine 232 is modified to N6-(pyridoxal phosphate)lysine.

It belongs to the group II decarboxylase family. MfnA subfamily. It depends on pyridoxal 5'-phosphate as a cofactor.

The catalysed reaction is L-aspartate + H(+) = beta-alanine + CO2. It participates in cofactor biosynthesis; coenzyme A biosynthesis. Functionally, catalyzes the decarboxylation of L-aspartate to produce beta-alanine. In Pyrococcus furiosus (strain ATCC 43587 / DSM 3638 / JCM 8422 / Vc1), this protein is Probable L-aspartate decarboxylase.